The primary structure comprises 253 residues: Phosphate import ATP-binding protein PstB 1 (253 aa).

The ABC transporter domain occupies 7–248 (LTVSDLSLYY…PEKQETSDYI (242 aa)). Residue 39–46 (GPSGCGKS) coordinates ATP.

The protein belongs to the ABC transporter superfamily. Phosphate importer (TC 3.A.1.7) family. As to quaternary structure, the complex is composed of two ATP-binding proteins (PstB), two transmembrane proteins (PstC and PstA) and a solute-binding protein (PstS).

The protein localises to the cell membrane. It catalyses the reaction phosphate(out) + ATP + H2O = ADP + 2 phosphate(in) + H(+). Functionally, part of the ABC transporter complex PstSACB involved in phosphate import. Responsible for energy coupling to the transport system. In Lactococcus lactis subsp. lactis (strain IL1403) (Streptococcus lactis), this protein is Phosphate import ATP-binding protein PstB 1.